Here is a 342-residue protein sequence, read N- to C-terminus: Homocysteine S-methyltransferase 4 (342 aa).

Positions 13–328 constitute a Hcy-binding domain; it reads ALRGFVREAG…ATVRAIARAV (316 aa). 3 residues coordinate Zn(2+): C245, C313, and C314.

As to quaternary structure, monomer. Requires Zn(2+) as cofactor.

The enzyme catalyses S-methyl-L-methionine + L-homocysteine = 2 L-methionine + H(+). Catalyzes methyl transfer from S-methylmethionine (SMM) to adenosyl-L-homocysteine (AdoMet). SMM degradation (by HMT-1, HMT-2, HMT-3 and HMT-4) and biosynthesis (by MMT1) constitute the SMM cycle in plants, which is probably required to achieve short term control of AdoMet level. In Zea mays (Maize), this protein is Homocysteine S-methyltransferase 4 (HMT-4).